The chain runs to 299 residues: MSEITSPHRSGSVAVIGRPNVGKSTLTNALVGAKVSIVSNRPQTTRHRLLGIATFPEGQLVLVDTPGLHREQKRAMNRVMNRAARGSLEGVDAAVLVIEAGRWDEEDTLAFRVLSDAGVPVVLVVNKVDRLKDKTALFPFLAQVSEGRTFAAVHPVSALKRKGLDALVGDLLKLVPEAEAMFGEDEITDRSQRFLAGELVREQLMRQLGEELPYATTVEIERFAEDGALLRIGAVIWVEREGQKAIVIGKGGTRLKEIGGKARLQMERLFGAKVFLETWVRVREGWSDDEAALKAFGYE.

Residues 9-177 (RSGSVAVIGR…VGDLLKLVPE (169 aa)) form the Era-type G domain. The G1 stretch occupies residues 17 to 24 (GRPNVGKS). Position 17-24 (17-24 (GRPNVGKS)) interacts with GTP. The tract at residues 43–47 (QTTRH) is G2. Positions 64–67 (DTPG) are G3. GTP is bound by residues 64–68 (DTPGL) and 126–129 (NKVD). The tract at residues 126–129 (NKVD) is G4. The G5 stretch occupies residues 156–158 (VSA). The KH type-2 domain occupies 200 to 284 (VREQLMRQLG…FLETWVRVRE (85 aa)).

This sequence belongs to the TRAFAC class TrmE-Era-EngA-EngB-Septin-like GTPase superfamily. Era GTPase family. Monomer.

It is found in the cytoplasm. It localises to the cell inner membrane. Its function is as follows. An essential GTPase that binds both GDP and GTP, with rapid nucleotide exchange. Plays a role in 16S rRNA processing and 30S ribosomal subunit biogenesis and possibly also in cell cycle regulation and energy metabolism. The protein is GTPase Era of Xanthomonas axonopodis pv. citri (strain 306).